Consider the following 128-residue polypeptide: Sulfurtransferase TusD (128 aa).

Residue C78 is the Cysteine persulfide intermediate of the active site.

This sequence belongs to the DsrE/TusD family. Heterohexamer, formed by a dimer of trimers. The hexameric TusBCD complex contains 2 copies each of TusB, TusC and TusD. The TusBCD complex interacts with TusE.

The protein localises to the cytoplasm. In terms of biological role, part of a sulfur-relay system required for 2-thiolation of 5-methylaminomethyl-2-thiouridine (mnm(5)s(2)U) at tRNA wobble positions. Accepts sulfur from TusA and transfers it in turn to TusE. In Escherichia coli O7:K1 (strain IAI39 / ExPEC), this protein is Sulfurtransferase TusD.